The sequence spans 312 residues: Pyridoxal kinase (312 aa).

Met1 is modified (N-acetylmethionine). Residues Ser12 and Thr47 each contribute to the pyridoxal 5'-phosphate site. Residues Ser12 and Thr47 each coordinate pyridoxamine. Ser59 carries the phosphoserine modification. A K(+)-binding site is contributed by Asp113. Residue Tyr127 coordinates pyridoxal 5'-phosphate. Thr148 contacts K(+). Residue Asn150 coordinates ADP. Asn150 is a binding site for ATP. At Ser164 the chain carries Phosphoserine. Thr186 contacts K(+). An ADP-binding site is contributed by 186–187 (TS). Position 186 to 187 (186 to 187 (TS)) interacts with ATP. The residue at position 213 (Ser213) is a Phosphoserine. Residues 223 to 226 (MHKV) and 233 to 234 (TG) contribute to the ADP site. ATP is bound by residues 223 to 226 (MHKV) and 233 to 234 (TG). Residue 232–235 (GTGD) coordinates pyridoxal 5'-phosphate. Asp235 contacts pyridoxamine. Residue Asp235 is the Proton acceptor of the active site. Ser285 carries the phosphoserine modification.

Belongs to the pyridoxine kinase family. In terms of assembly, homodimer. It depends on Zn(2+) as a cofactor. Mg(2+) is required as a cofactor. Ubiquitous.

Its subcellular location is the cytoplasm. It localises to the cytosol. The catalysed reaction is pyridoxal + ATP = pyridoxal 5'-phosphate + ADP + H(+). The enzyme catalyses pyridoxamine + ATP = pyridoxamine 5'-phosphate + ADP + H(+). It catalyses the reaction pyridoxine + ATP = pyridoxine 5'-phosphate + ADP + H(+). It participates in cofactor metabolism; pyridoxal 5'-phosphate salvage; pyridoxal 5'-phosphate from pyridoxal: step 1/1. Its pathway is cofactor metabolism; pyridoxal 5'-phosphate salvage; pyridoxine 5'-phosphate from pyridoxine: step 1/1. The protein operates within cofactor metabolism; pyridoxal 5'-phosphate salvage; pyridoxamine 5'-phosphate from pyridoxamine: step 1/1. Activated by K(+). Activity is increased in the presence of Na(+). In terms of biological role, catalyzes the phosphorylation of the dietary vitamin B6 vitamers pyridoxal (PL), pyridoxine (PN) and pyridoxamine (PM) to form pyridoxal 5'-phosphate (PLP), pyridoxine 5'-phosphate (PNP) and pyridoxamine 5'-phosphate (PMP), respectively. PLP is the active form of vitamin B6, and acts as a cofactor for over 140 different enzymatic reactions. The chain is Pyridoxal kinase (PDXK) from Ovis aries (Sheep).